Here is a 147-residue protein sequence, read N- to C-terminus: Large ribosomal subunit protein uL13 (147 aa).

This sequence belongs to the universal ribosomal protein uL13 family. In terms of assembly, part of the 50S ribosomal subunit.

This protein is one of the early assembly proteins of the 50S ribosomal subunit, although it is not seen to bind rRNA by itself. It is important during the early stages of 50S assembly. This is Large ribosomal subunit protein uL13 from Lactobacillus acidophilus (strain ATCC 700396 / NCK56 / N2 / NCFM).